The sequence spans 382 residues: Alkanesulfonate monooxygenase (382 aa).

It belongs to the SsuD family.

It catalyses the reaction an alkanesulfonate + FMNH2 + O2 = an aldehyde + FMN + sulfite + H2O + 2 H(+). Its function is as follows. Catalyzes the desulfonation of aliphatic sulfonates. In Pseudomonas putida (strain ATCC 47054 / DSM 6125 / CFBP 8728 / NCIMB 11950 / KT2440), this protein is Alkanesulfonate monooxygenase.